Reading from the N-terminus, the 354-residue chain is Anthranilate phosphoribosyltransferase (354 aa).

It belongs to the anthranilate phosphoribosyltransferase family.

The catalysed reaction is N-(5-phospho-beta-D-ribosyl)anthranilate + diphosphate = 5-phospho-alpha-D-ribose 1-diphosphate + anthranilate. It functions in the pathway amino-acid biosynthesis; L-tryptophan biosynthesis; L-tryptophan from chorismate: step 2/5. This chain is Anthranilate phosphoribosyltransferase (trp4), found in Schizosaccharomyces pombe (strain 972 / ATCC 24843) (Fission yeast).